A 268-amino-acid polypeptide reads, in one-letter code: Tryptophan synthase alpha chain (268 aa).

Active-site proton acceptor residues include E49 and D60.

The protein belongs to the TrpA family. Tetramer of two alpha and two beta chains.

It carries out the reaction (1S,2R)-1-C-(indol-3-yl)glycerol 3-phosphate + L-serine = D-glyceraldehyde 3-phosphate + L-tryptophan + H2O. It participates in amino-acid biosynthesis; L-tryptophan biosynthesis; L-tryptophan from chorismate: step 5/5. Its function is as follows. The alpha subunit is responsible for the aldol cleavage of indoleglycerol phosphate to indole and glyceraldehyde 3-phosphate. The sequence is that of Tryptophan synthase alpha chain from Escherichia coli O6:H1 (strain CFT073 / ATCC 700928 / UPEC).